A 1342-amino-acid chain; its full sequence is MVYSYTEKKRIRKDFGKRPKVLDIPYLLSIQLNSFKKFIQPDLSGQHGLEAAFRSVFPIRGYNGNSELQYVSYRLGETIFDVKECQIRGATYSAPLRVKLRLVIYERDILEATVKDIKEQEVYMGEIPLMTNNGTFIINGTERVVVSQLHRSPGVFFDSDKGKTHSSGKVLYNARIIPYRGSWLDFEFDPKDNLFVRIDRRRKLPVSIILRALNYNTEEILNIFFEKNIFKIENNKIVLELVPERLRGETASFNIKKNGIIYVEKGRRITAKHIQELKNNKIKSITVPVEYILGRIVSKNYVDKKTGETIISSNTELSLEILEKLKKLGFYSIETLFTNDLDHGPYISETLRIDSSNDRMSALIEIYRVMRPGEPPTKEATENLFENLFFSEDRYDLSTVGRMKFNRSLLREETKGSSTLNKEDIIDVIKKIIDIRNGKGEVDDIDHLGNRRVRSVGEMAENQFRIGLVRVERAVKERLSIGDLDTLMPQDMINAKPISAAVKEFFGSSQLSQFMDQNNPLSEITHKRRISALGLGGLTRERAGFEVRDVHPTHYGRVCPIETPEGPNIGLINSLSVYAQTNSYGFLETPYRKVCNGLVSEEIHYLSAIEEGNYIIAQANTNIDKTGFFTDDLVTCRHKGESSLFNRNQVNYMDVSTQQIVSVGASLIPFLEHDDANRALMGANMQRQAVPTLKTDKPLIGTGMERAVAVDSGVTAVAKRSGVVQYVDASRIVIKVDEKEMYSREAGIDIYNLTKYTRSNQNTCINQQPCVNLGEKIKKGDVLADGPSTDLGELALGQNMRVAFMPWNGYNFEDSILVSERVVQEDRFTTIHIQELSCISRDTKLGAEEISSDIPNVGEAALSKLDESGIVYIGAEVTGGDILVGKVTPKGETQLTPEEKLLRAIFGEKASDVKDSSLRVPNGVSGTVIDVQIFTRDGVKKDKRALEIEDMQLKKIKQDLTEEFKIFESSLFTHIKKTFISLDIETKQLDTLPFEKWFSVDIKQKDKKKEIEKLAKQHHELKEEFNKKIEIKRQKITQGDDLAPGVLKIVKVYLAVKRQIQPGDKMAGRHGNKGVISKINPVEDMPYDENGIPVDIVLNPLGVPSRMNIGQILETHLGMAAKGIGDKINHMLKTQEKISNLRKFIQKAFDLGDNLRQKVNLDTFSNEEILRLAKNLKNGIPISTPVFDGAQENEIKQMLKFAGLPTSGQIILFDGRTGEKFERPVTVGYMYMLKLNHLVDDKMHARSTGSYSLVTQQPLGGKAQFGGQRFGEMEVWALEAYGASYTLQEMLTVKSDDVNGRTKMYKNIVDGNHQMEPGMPESFNVLLKEIRSLGINIELESE.

The protein belongs to the RNA polymerase beta chain family. In terms of assembly, the RNAP catalytic core consists of 2 alpha, 1 beta, 1 beta' and 1 omega subunit. When a sigma factor is associated with the core the holoenzyme is formed, which can initiate transcription.

The catalysed reaction is RNA(n) + a ribonucleoside 5'-triphosphate = RNA(n+1) + diphosphate. DNA-dependent RNA polymerase catalyzes the transcription of DNA into RNA using the four ribonucleoside triphosphates as substrates. This chain is DNA-directed RNA polymerase subunit beta, found in Buchnera aphidicola subsp. Acyrthosiphon pisum (strain 5A).